The following is a 277-amino-acid chain: Urease accessory protein UreD (277 aa).

Residues 1-20 (MRQTAQEDASPAPMQRAHGT) form a disordered region.

Belongs to the UreD family. UreD, UreF and UreG form a complex that acts as a GTP-hydrolysis-dependent molecular chaperone, activating the urease apoprotein by helping to assemble the nickel containing metallocenter of UreC. The UreE protein probably delivers the nickel.

The protein resides in the cytoplasm. Its function is as follows. Required for maturation of urease via the functional incorporation of the urease nickel metallocenter. This is Urease accessory protein UreD from Chelativorans sp. (strain BNC1).